Reading from the N-terminus, the 384-residue chain is Protein Brevis radix-like 4 (384 aa).

Disordered stretches follow at residues methionine 1–lysine 35 and proline 50–glutamate 78. A BRX 1 domain is found at lysine 150–asparagine 205. Disordered regions lie at residues phenylalanine 214–serine 270 and serine 304–serine 325. Over residues arginine 221–aspartate 235 the composition is skewed to basic and acidic residues. Over residues tyrosine 260–serine 270 the composition is skewed to polar residues. Positions serine 309–glutamate 318 are enriched in basic and acidic residues. The BRX 2 domain occupies asparagine 329–leucine 384.

It belongs to the BRX family. In terms of tissue distribution, expressed in roots.

The protein localises to the nucleus. The sequence is that of Protein Brevis radix-like 4 (BRXL4) from Arabidopsis thaliana (Mouse-ear cress).